The chain runs to 205 residues: Small ribosomal subunit protein uS4 (205 aa).

The interval 18–46 (NIWGRPKSPVNSRAYGPGQHGQRRKSKVS) is disordered. Residues 94 to 155 (SRLDAVVYRA…RSRNMALVLE (62 aa)) form the S4 RNA-binding domain.

The protein belongs to the universal ribosomal protein uS4 family. Part of the 30S ribosomal subunit. Contacts protein S5. The interaction surface between S4 and S5 is involved in control of translational fidelity.

Functionally, one of the primary rRNA binding proteins, it binds directly to 16S rRNA where it nucleates assembly of the body of the 30S subunit. Its function is as follows. With S5 and S12 plays an important role in translational accuracy. The sequence is that of Small ribosomal subunit protein uS4 from Phenylobacterium zucineum (strain HLK1).